The chain runs to 373 residues: ATP phosphoribosyltransferase regulatory subunit (373 aa).

This sequence belongs to the class-II aminoacyl-tRNA synthetase family. HisZ subfamily. As to quaternary structure, heteromultimer composed of HisG and HisZ subunits.

The protein localises to the cytoplasm. Its pathway is amino-acid biosynthesis; L-histidine biosynthesis; L-histidine from 5-phospho-alpha-D-ribose 1-diphosphate: step 1/9. Functionally, required for the first step of histidine biosynthesis. May allow the feedback regulation of ATP phosphoribosyltransferase activity by histidine. The chain is ATP phosphoribosyltransferase regulatory subunit from Rhizobium etli (strain ATCC 51251 / DSM 11541 / JCM 21823 / NBRC 15573 / CFN 42).